Consider the following 142-residue polypeptide: Putative transcriptional regulatory protein PF0535 (142 aa).

Belongs to the Tfx family.

Putative transcriptional regulator. The protein is Putative transcriptional regulatory protein PF0535 of Pyrococcus furiosus (strain ATCC 43587 / DSM 3638 / JCM 8422 / Vc1).